A 316-amino-acid polypeptide reads, in one-letter code: Transaldolase (316 aa).

Residue Lys-126 is the Schiff-base intermediate with substrate of the active site.

Belongs to the transaldolase family. Type 1 subfamily. Homodimer.

Its subcellular location is the cytoplasm. The catalysed reaction is D-sedoheptulose 7-phosphate + D-glyceraldehyde 3-phosphate = D-erythrose 4-phosphate + beta-D-fructose 6-phosphate. The protein operates within carbohydrate degradation; pentose phosphate pathway; D-glyceraldehyde 3-phosphate and beta-D-fructose 6-phosphate from D-ribose 5-phosphate and D-xylulose 5-phosphate (non-oxidative stage): step 2/3. Its function is as follows. Transaldolase is important for the balance of metabolites in the pentose-phosphate pathway. This Methylibium petroleiphilum (strain ATCC BAA-1232 / LMG 22953 / PM1) protein is Transaldolase.